Reading from the N-terminus, the 233-residue chain is Peroxisomal membrane protein 11-5 (233 aa).

Topologically, residues 1–92 (MSSLESARAD…PLILLGKSKN (92 aa)) are cytoplasmic. A helical membrane pass occupies residues 93 to 113 (ALLSTFLFLDQIVWAGRTGIY). The Lumenal segment spans residues 114–206 (KNKERAEFLS…LLQLAPKKVT (93 aa)). The chain crosses the membrane as a helical span at residues 207–226 (PRVTGAFGFASSLIACYQLL).

This sequence belongs to the peroxin-11 family. In terms of tissue distribution, expressed in seedlings, roots, shoots, leaf sheaths, flag leaf, panicles, spikelets, and endosperm.

The protein localises to the peroxisome membrane. Involved in peroxisomal proliferation. This is Peroxisomal membrane protein 11-5 (PEX11-5) from Oryza sativa subsp. japonica (Rice).